We begin with the raw amino-acid sequence, 68 residues long: Sperm-associated antigen 11A (68 aa).

Positions 1 to 19 (MKVLLLFAVFFCLVQRNSG) are cleaved as a signal peptide. Disulfide bonds link Cys-30–Cys-59, Cys-37–Cys-52, and Cys-42–Cys-60.

Belongs to the beta-defensin family. Only expressed in epididymis (middle part of the caput).

Its subcellular location is the secreted. Functionally, has antimicrobial activity against E.coli. Plays a role in the defense response in the male reproductive tract, contributing to sperm maturation, storage and protection. The sequence is that of Sperm-associated antigen 11A from Rattus norvegicus (Rat).